The sequence spans 146 residues: Hemoglobin subunit beta (146 aa).

N-acetylvaline is present on Val1. The Globin domain occupies 2–146 (HLTGEEKSAV…VANALAHKYH (145 aa)). Residue Thr12 is modified to Phosphothreonine. A Phosphoserine modification is found at Ser44. Lys59 is modified (N6-acetyllysine). Heme b is bound at residue His63. An N6-acetyllysine modification is found at Lys82. His92 contacts heme b. Cys93 is modified (S-nitrosocysteine). An N6-acetyllysine modification is found at Lys144.

It belongs to the globin family. As to quaternary structure, heterotetramer of two alpha chains and two beta chains. As to expression, red blood cells.

Functionally, involved in oxygen transport from the lung to the various peripheral tissues. The protein is Hemoglobin subunit beta (HBB) of Saguinus oedipus (Cotton-top tamarin).